We begin with the raw amino-acid sequence, 262 residues long: ATP synthase subunit a (262 aa).

Helical transmembrane passes span 32–52, 98–118, 127–147, 153–173, 189–209, and 219–239; these read IAFT…AVFV, LFMF…VLGI, FTIT…VGFW, FFSL…IFPI, LFVA…FVID, and LLVG…EILV.

This sequence belongs to the ATPase A chain family. F-type ATPases have 2 components, CF(1) - the catalytic core - and CF(0) - the membrane proton channel. CF(1) has five subunits: alpha(3), beta(3), gamma(1), delta(1), epsilon(1). CF(0) has four main subunits: a, b, b' and c.

Its subcellular location is the cell inner membrane. In terms of biological role, key component of the proton channel; it plays a direct role in the translocation of protons across the membrane. The sequence is that of ATP synthase subunit a from Erythrobacter litoralis (strain HTCC2594).